The following is a 164-amino-acid chain: Large ribosomal subunit protein uL10 (164 aa).

It belongs to the universal ribosomal protein uL10 family. As to quaternary structure, part of the ribosomal stalk of the 50S ribosomal subunit. The N-terminus interacts with L11 and the large rRNA to form the base of the stalk. The C-terminus forms an elongated spine to which L12 dimers bind in a sequential fashion forming a multimeric L10(L12)X complex.

In terms of biological role, forms part of the ribosomal stalk, playing a central role in the interaction of the ribosome with GTP-bound translation factors. This chain is Large ribosomal subunit protein uL10 (rplJ), found in Helicobacter pylori (strain ATCC 700392 / 26695) (Campylobacter pylori).